A 161-amino-acid polypeptide reads, in one-letter code: Nucleotide-binding protein Vapar_3769 (161 aa).

The protein belongs to the YajQ family.

Its function is as follows. Nucleotide-binding protein. The chain is Nucleotide-binding protein Vapar_3769 from Variovorax paradoxus (strain S110).